A 355-amino-acid chain; its full sequence is Histidinol-phosphate aminotransferase 2 (355 aa).

Lysine 210 bears the N6-(pyridoxal phosphate)lysine mark.

Belongs to the class-II pyridoxal-phosphate-dependent aminotransferase family. Histidinol-phosphate aminotransferase subfamily. In terms of assembly, homodimer. Pyridoxal 5'-phosphate serves as cofactor.

The enzyme catalyses L-histidinol phosphate + 2-oxoglutarate = 3-(imidazol-4-yl)-2-oxopropyl phosphate + L-glutamate. It participates in amino-acid biosynthesis; L-histidine biosynthesis; L-histidine from 5-phospho-alpha-D-ribose 1-diphosphate: step 7/9. This chain is Histidinol-phosphate aminotransferase 2, found in Gluconobacter oxydans (strain 621H) (Gluconobacter suboxydans).